The chain runs to 70 residues: ATP synthase subunit c (70 aa).

The next 2 helical transmembrane spans lie at 4–24 (IAAGIAMAGAAIGGGVGDGIV) and 47–67 (FIGVGLVEAMPIIAFVVALMV).

The protein belongs to the ATPase C chain family. In terms of assembly, F-type ATPases have 2 components, F(1) - the catalytic core - and F(0) - the membrane proton channel. F(1) has five subunits: alpha(3), beta(3), gamma(1), delta(1), epsilon(1). F(0) has three main subunits: a(1), b(2) and c(10-14). The alpha and beta chains form an alternating ring which encloses part of the gamma chain. F(1) is attached to F(0) by a central stalk formed by the gamma and epsilon chains, while a peripheral stalk is formed by the delta and b chains.

It localises to the cell membrane. Its function is as follows. F(1)F(0) ATP synthase produces ATP from ADP in the presence of a proton or sodium gradient. F-type ATPases consist of two structural domains, F(1) containing the extramembraneous catalytic core and F(0) containing the membrane proton channel, linked together by a central stalk and a peripheral stalk. During catalysis, ATP synthesis in the catalytic domain of F(1) is coupled via a rotary mechanism of the central stalk subunits to proton translocation. In terms of biological role, key component of the F(0) channel; it plays a direct role in translocation across the membrane. A homomeric c-ring of between 10-14 subunits forms the central stalk rotor element with the F(1) delta and epsilon subunits. This is ATP synthase subunit c from Levilactobacillus brevis (strain ATCC 367 / BCRC 12310 / CIP 105137 / JCM 1170 / LMG 11437 / NCIMB 947 / NCTC 947) (Lactobacillus brevis).